The following is a 212-amino-acid chain: uncharacterized protein (212 aa).

The next 2 membrane-spanning stretches (helical) occupy residues leucine 54–glycine 74 and tryptophan 79–leucine 99.

Its subcellular location is the cell membrane. This is an uncharacterized protein from Chlamydia pneumoniae (Chlamydophila pneumoniae).